Here is a 722-residue protein sequence, read N- to C-terminus: Phenylalanine ammonia-lyase lenB (722 aa).

The active-site Proton donor/acceptor is Tyr-83. The segment at 117-136 (LPTDRSSSRPSSRYPHGLRS) is disordered. Positions 190 to 192 (ASG) form a cross-link, 5-imidazolinone (Ala-Gly). 2,3-didehydroalanine (Ser) is present on Ser-191. Residues Asn-247, Gln-334, Arg-340, Asn-370, Lys-441, Glu-469, and Asn-472 each coordinate (E)-cinnamate.

The protein belongs to the PAL/histidase family. In terms of processing, contains an active site 4-methylidene-imidazol-5-one (MIO), which is formed autocatalytically by cyclization and dehydration of residues Ala-Ser-Gly.

The enzyme catalyses L-phenylalanine = (E)-cinnamate + NH4(+). The protein operates within alkaloid biosynthesis. Phenylalanine ammonia-lyase; part of the gene cluster that mediates the biosynthesis of the ergot alkaloids lentopeptins A and B. Within the pathway, lenB provides the cinnamic acid starter unit for the synthesis of the N-acyldiketopiperazine intermediate by the NRPS lenA. Cinnamic acid is condensed with the Ala-Val-Ala peptide chain by lenA which leads to the N-acyldiketopiperazine intermediate which in turn is converted into lentopeptins A and B by the cytochrome P450 monooxygenase lenC. This is Phenylalanine ammonia-lyase lenB from Aspergillus lentulus.